The sequence spans 199 residues: Urease accessory protein UreG (199 aa).

Gly-8 to Thr-15 contributes to the GTP binding site.

Belongs to the SIMIBI class G3E GTPase family. UreG subfamily. In terms of assembly, homodimer. UreH, UreF and UreG form a complex that acts as a GTP-hydrolysis-dependent molecular chaperone, activating the urease apoprotein by helping to assemble the nickel containing metallocenter of UreC. The UreE protein probably delivers the nickel.

The protein resides in the cytoplasm. In terms of biological role, facilitates the functional incorporation of the urease nickel metallocenter. This process requires GTP hydrolysis, probably effectuated by UreG. The protein is Urease accessory protein UreG of Helicobacter pylori (strain J99 / ATCC 700824) (Campylobacter pylori J99).